The following is a 362-amino-acid chain: Cobalt-precorrin-5B C(1)-methyltransferase (362 aa).

Belongs to the CbiD family.

It catalyses the reaction Co-precorrin-5B + S-adenosyl-L-methionine = Co-precorrin-6A + S-adenosyl-L-homocysteine. It participates in cofactor biosynthesis; adenosylcobalamin biosynthesis; cob(II)yrinate a,c-diamide from sirohydrochlorin (anaerobic route): step 6/10. Functionally, catalyzes the methylation of C-1 in cobalt-precorrin-5B to form cobalt-precorrin-6A. The polypeptide is Cobalt-precorrin-5B C(1)-methyltransferase (Synechococcus sp. (strain CC9902)).